The chain runs to 117 residues: Large ribosomal subunit protein bL20 (117 aa).

It belongs to the bacterial ribosomal protein bL20 family.

Binds directly to 23S ribosomal RNA and is necessary for the in vitro assembly process of the 50S ribosomal subunit. It is not involved in the protein synthesizing functions of that subunit. The polypeptide is Large ribosomal subunit protein bL20 (Finegoldia magna (strain ATCC 29328 / DSM 20472 / WAL 2508) (Peptostreptococcus magnus)).